A 636-amino-acid chain; its full sequence is Tumor protein p73 (636 aa).

The segment at 1-46 (MAQSTATSPDGGTTFEHLWSSLEPDSTYFDLPQSSRGNNEVVGGTD) is transactivation. Thr-27 is modified (phosphothreonine; by PLK1). The residue at position 28 (Tyr-28) is a Phosphotyrosine; by SRC and HCK. The disordered stretch occupies residues 78-104 (RAASASPYTPEHAASVPTHSPYAQPSS). The segment covering 94–104 (PTHSPYAQPSS) has biased composition (polar residues). Tyr-99 bears the Phosphotyrosine; by ABL1 mark. The DNA-binding stretch occupies residues 131–310 (FQQSSTAKSA…DRKADEDHYR (180 aa)). Zn(2+) is bound by residues Cys-194, His-197, Cys-258, and Cys-262. Positions 314-345 (ALNESSAKNGAASKRAFKQSPPAVPALGAGVK) are disordered. The tract at residues 345–380 (KKRRHGDEDTYYLQVRGRENFEILMKLKESLELMEL) is interaction with HIPK2. The tract at residues 345–386 (KKRRHGDEDTYYLQVRGRENFEILMKLKESLELMELVPQPLV) is oligomerization. Residues 483-487 (PPPPY) carry the PPxY motif motif. The SAM domain maps to 485-551 (PPYHADPSLV…WRGLQDLKQG (67 aa)). A Glycyl lysine isopeptide (Lys-Gly) (interchain with G-Cter in SUMO); in isoform Alpha cross-link involves residue Lys-627. A Glycyl lysine isopeptide (Lys-Gly) (interchain with G-Cter in SUMO2) cross-link involves residue Lys-627.

It belongs to the p53 family. Found in a complex with p53/TP53 and CABLES1. The C-terminal oligomerization domain binds to the ABL1 tyrosine kinase SH3 domain. Interacts with HECW2. Isoform Beta interacts homotypically and with p53/TP53, whereas isoform Alpha does not. Isoform Gamma interacts homotypically and with all p73 isoforms. Isoform Delta interacts with isoform Gamma, isoform Alpha, and homotypically. Isoforms Alpha and Beta interact with HIPK2. Isoform Alpha interacts with RANBP9. Isoform Beta interacts with WWOX. Interacts (via SAM domain) with FBXO45 (via B30.2/SPRY domain). Interacts with YAP1 (phosphorylated form). Interacts with HCK (via SH3 domain); this inhibits TP73 activity and degradation. Interacts (via SAM domain) with NQO1; this interaction is NADH-dependent, stabilizes TP73 in response to oxidative stress and protects it from ubiquitin-independent degradation by the 20S proteasome. In terms of assembly, (Microbial infection) Interacts with Epstein-Barr virus protein EBNA6; this interaction inhibits TP73-mediated apoptotic pathway. The cofactor is Zn(2+). In terms of processing, isoform alpha (but not isoform beta) is sumoylated on Lys-627, which potentiates proteasomal degradation but does not affect transcriptional activity. Phosphorylation by PLK1 and PLK3 inhibits the transcription regulator activity and pro-apoptotic function. Higher levels of phosphorylation seen in the brain from patients with Huntington disease. Post-translationally, polyubiquitinated by RCHY1/PIRH2; leading to its degradation by the proteasome. In terms of tissue distribution, expressed in striatal neurons of patients with Huntington disease (at protein level). Brain, kidney, placenta, colon, heart, liver, spleen, skeletal muscle, prostate, thymus and pancreas. Highly expressed in fetal tissue. Expressed in the respiratory epithelium.

The protein localises to the nucleus. It is found in the cytoplasm. Participates in the apoptotic response to DNA damage. Isoforms containing the transactivation domain are pro-apoptotic, isoforms lacking the domain are anti-apoptotic and block the function of p53 and transactivating p73 isoforms. May be a tumor suppressor protein. Is an activator of FOXJ1 expression. It is an essential factor for the positive regulation of lung ciliated cell differentiation. The chain is Tumor protein p73 (TP73) from Homo sapiens (Human).